The chain runs to 360 residues: 3-dehydroquinate synthase (360 aa).

Residues 106–110 (GVIGD), 130–131 (TS), K143, and K152 contribute to the NAD(+) site. Zn(2+) is bound by residues E185, H246, and H262.

It belongs to the sugar phosphate cyclases superfamily. Dehydroquinate synthase family. It depends on Co(2+) as a cofactor. Zn(2+) serves as cofactor. NAD(+) is required as a cofactor.

The protein localises to the cytoplasm. It carries out the reaction 7-phospho-2-dehydro-3-deoxy-D-arabino-heptonate = 3-dehydroquinate + phosphate. Its pathway is metabolic intermediate biosynthesis; chorismate biosynthesis; chorismate from D-erythrose 4-phosphate and phosphoenolpyruvate: step 2/7. Functionally, catalyzes the conversion of 3-deoxy-D-arabino-heptulosonate 7-phosphate (DAHP) to dehydroquinate (DHQ). This Leuconostoc citreum (strain KM20) protein is 3-dehydroquinate synthase.